The sequence spans 409 residues: Phospholipase ABHD3 (409 aa).

Residues 26 to 46 (GFFGSGVGLSLILGFSVAYAF) form a helical; Signal-anchor for type II membrane protein membrane-spanning segment. An AB hydrolase-1 domain is found at 140-233 (PTILLLPGLT…MLLLNYLGKI (94 aa)). Active-site charge relay system residues include Ser-220, Asp-346, and His-375.

It belongs to the AB hydrolase superfamily. AB hydrolase 4 family.

Its subcellular location is the membrane. It carries out the reaction a 1,2-diacyl-sn-glycero-3-phosphocholine + H2O = a 1-acyl-sn-glycero-3-phosphocholine + a fatty acid + H(+). The enzyme catalyses a 1,2-diacyl-sn-glycero-3-phosphocholine + H2O = a 2-acyl-sn-glycero-3-phosphocholine + a fatty acid + H(+). It catalyses the reaction 1-tetradecanoyl-2-(9Z,12Z-octadecadienoyl)-sn-glycero-3-phosphocholine + H2O = 2-(9Z,12Z-octadecadienoyl)-sn-glycero-3-phosphocholine + tetradecanoate + H(+). The catalysed reaction is 1-tetradecanoyl-2-(9Z,12Z-octadecadienoyl)-sn-glycero-3-phosphocholine + H2O = 1-tetradecanoyl-sn-glycero-3-phosphocholine + (9Z,12Z)-octadecadienoate + H(+). It carries out the reaction 1-tetradecanoyl-2-(5Z,8Z,11Z,14Z-eicosatetraenoyl)-sn-glycero-3-phosphocholine + H2O = 2-(5Z,8Z,11Z,14Z)-eicosatetraenoyl-sn-glycero-3-phosphocholine + tetradecanoate + H(+). The enzyme catalyses 1-tetradecanoyl-2-(4Z,7Z,10Z,13Z,16Z,19Z-docosahexaenoyl)-sn-glycero-3-phosphocholine + H2O = 2-(4Z,7Z,10Z,13Z,16Z,19Z-docosahexaenoyl)-sn-glycero-3-phosphocholine + tetradecanoate + H(+). It catalyses the reaction 1,2-ditetradecanoyl-sn-glycero-3-phosphocholine + H2O = 2-tetradecanoyl-sn-glycero-3-phosphocholine + tetradecanoate + H(+). The catalysed reaction is 1-octadecanoyl-2-acetyl-sn-glycero-3-phosphocholine + H2O = 1-octadecanoyl-sn-glycero-3-phosphocholine + acetate + H(+). It carries out the reaction 1,2-ditetradecanoyl-sn-glycero-3-phosphocholine + H2O = 1-tetradecanoyl-sn-glycero-3-phosphocholine + tetradecanoate + H(+). The enzyme catalyses 1-octadecanoyl-2-pentanoyl-sn-glycero-3-phosphocholine + H2O = pentanoate + 1-octadecanoyl-sn-glycero-3-phosphocholine + H(+). It catalyses the reaction 1-octadecanoyl-2-hexanoyl-sn-glycero-3-phosphocholine + H2O = hexanoate + 1-octadecanoyl-sn-glycero-3-phosphocholine + H(+). The catalysed reaction is 1-octadecanoyl-2-octanoyl-sn-glycero-3-phosphocholine + H2O = 1-octadecanoyl-sn-glycero-3-phosphocholine + octanoate + H(+). It carries out the reaction 1-octadecanoyl-2-nonanoyl-sn-glycero-3-phosphocholine + H2O = nonanoate + 1-octadecanoyl-sn-glycero-3-phosphocholine + H(+). The enzyme catalyses 1-O-hexadecyl-2-nonadioyl-sn-glycero-3-phosphocholine + H2O = nonanedioate + 1-O-hexadecyl-sn-glycero-3-phosphocholine + H(+). It catalyses the reaction 1-hexadecanoyl-2-nonadioyl-sn-glycero-3-phosphocholine + H2O = nonanedioate + 1-hexadecanoyl-sn-glycero-3-phosphocholine + H(+). The catalysed reaction is 1-hexadecanoyl-2-(9-oxononanoyl)-sn-glycero-3-phosphocholine + H2O = 9-oxononanoate + 1-hexadecanoyl-sn-glycero-3-phosphocholine + H(+). It carries out the reaction 1-hexadecanoyl-2-(5-oxopentanoyl)-sn-glycero-3-phosphocholine + H2O = 5-oxopentanoate + 1-hexadecanoyl-sn-glycero-3-phosphocholine + H(+). The enzyme catalyses 1-hexadecanoyl-2-glutaroyl-sn-glycero-3-phosphocholine + H2O = glutarate + 1-hexadecanoyl-sn-glycero-3-phosphocholine + H(+). It catalyses the reaction 1-O-hexadecyl-2-acetyl-sn-glycero-3-phosphocholine + H2O = 1-O-hexadecyl-sn-glycero-3-phosphocholine + acetate + H(+). Its function is as follows. Phospholipase that may play a role in phospholipids remodeling. May selectively cleave myristate (C14)-containing phosphatidylcholines through its predominant phospholipase 1 activity, cleaving preferentially acyl groups in sn1 position. In parallel, may have a minor phospholipase 2 activity acting on acyl groups in position sn2. In addition to (C14)-containing phosphatidylcholines, may also act on other medium-chain-containing and oxidatively truncated phospholipids. This Homo sapiens (Human) protein is Phospholipase ABHD3.